The chain runs to 120 residues: Ribonuclease P protein component (120 aa).

Belongs to the RnpA family. As to quaternary structure, consists of a catalytic RNA component (M1 or rnpB) and a protein subunit.

The catalysed reaction is Endonucleolytic cleavage of RNA, removing 5'-extranucleotides from tRNA precursor.. Its function is as follows. RNaseP catalyzes the removal of the 5'-leader sequence from pre-tRNA to produce the mature 5'-terminus. It can also cleave other RNA substrates such as 4.5S RNA. The protein component plays an auxiliary but essential role in vivo by binding to the 5'-leader sequence and broadening the substrate specificity of the ribozyme. The chain is Ribonuclease P protein component from Thioalkalivibrio sulfidiphilus (strain HL-EbGR7).